Consider the following 165-residue polypeptide: Anterior gradient protein 3 (165 aa).

An N-terminal signal peptide occupies residues 1–20 (MLHSALALCLLLITVSSNLA). The short motif at 162 to 165 (QSEL) is the Prevents secretion from ER element.

The protein belongs to the AGR family. In terms of assembly, interacts with LYPD3 and DAG1 (alphaDAG1). In terms of tissue distribution, expressed in the ciliated cells of the airway epithelium. Not detected in the mucous cells.

It is found in the endoplasmic reticulum. Its subcellular location is the cytoplasm. Its function is as follows. Required for calcium-mediated regulation of ciliary beat frequency and mucociliary clearance in the airway. Might be involved in the regulation of intracellular calcium in tracheal epithelial cells. This chain is Anterior gradient protein 3, found in Mus musculus (Mouse).